The primary structure comprises 349 residues: Lipoyl synthase (349 aa).

[4Fe-4S] cluster-binding residues include Cys-55, Cys-60, Cys-66, Cys-81, Cys-85, Cys-88, and Ser-292. Positions 67 to 281 (WESREATFLI…ADFARELGFG (215 aa)) constitute a Radical SAM core domain.

Belongs to the radical SAM superfamily. Lipoyl synthase family. The cofactor is [4Fe-4S] cluster.

It localises to the cytoplasm. It carries out the reaction [[Fe-S] cluster scaffold protein carrying a second [4Fe-4S](2+) cluster] + N(6)-octanoyl-L-lysyl-[protein] + 2 oxidized [2Fe-2S]-[ferredoxin] + 2 S-adenosyl-L-methionine + 4 H(+) = [[Fe-S] cluster scaffold protein] + N(6)-[(R)-dihydrolipoyl]-L-lysyl-[protein] + 4 Fe(3+) + 2 hydrogen sulfide + 2 5'-deoxyadenosine + 2 L-methionine + 2 reduced [2Fe-2S]-[ferredoxin]. It functions in the pathway protein modification; protein lipoylation via endogenous pathway; protein N(6)-(lipoyl)lysine from octanoyl-[acyl-carrier-protein]: step 2/2. Functionally, catalyzes the radical-mediated insertion of two sulfur atoms into the C-6 and C-8 positions of the octanoyl moiety bound to the lipoyl domains of lipoate-dependent enzymes, thereby converting the octanoylated domains into lipoylated derivatives. This chain is Lipoyl synthase, found in Corynebacterium diphtheriae (strain ATCC 700971 / NCTC 13129 / Biotype gravis).